A 291-amino-acid polypeptide reads, in one-letter code: Proteasome subunit beta (291 aa).

Positions 1 to 57 (MTWPLPDRLSINSLSGTPAVDLSSFTDFLRRQAPELLPASISGGAPLAGGDAQLPHG) are cleaved as a propeptide — removed in mature form; by autocatalysis. The Nucleophile role is filled by threonine 58.

The protein belongs to the peptidase T1B family. The 20S proteasome core is composed of 14 alpha and 14 beta subunits that assemble into four stacked heptameric rings, resulting in a barrel-shaped structure. The two inner rings, each composed of seven catalytic beta subunits, are sandwiched by two outer rings, each composed of seven alpha subunits. The catalytic chamber with the active sites is on the inside of the barrel. Has a gated structure, the ends of the cylinder being occluded by the N-termini of the alpha-subunits. Is capped by the proteasome-associated ATPase, ARC.

The protein localises to the cytoplasm. It catalyses the reaction Cleavage of peptide bonds with very broad specificity.. The protein operates within protein degradation; proteasomal Pup-dependent pathway. With respect to regulation, the formation of the proteasomal ATPase ARC-20S proteasome complex, likely via the docking of the C-termini of ARC into the intersubunit pockets in the alpha-rings, may trigger opening of the gate for substrate entry. Interconversion between the open-gate and close-gate conformations leads to a dynamic regulation of the 20S proteasome proteolysis activity. Functionally, component of the proteasome core, a large protease complex with broad specificity involved in protein degradation. This chain is Proteasome subunit beta, found in Mycobacterium tuberculosis (strain ATCC 25177 / H37Ra).